The primary structure comprises 156 residues: Small ribosomal subunit protein uS7 (156 aa).

It belongs to the universal ribosomal protein uS7 family. In terms of assembly, part of the 30S ribosomal subunit. Contacts proteins S9 and S11.

Its function is as follows. One of the primary rRNA binding proteins, it binds directly to 16S rRNA where it nucleates assembly of the head domain of the 30S subunit. Is located at the subunit interface close to the decoding center, probably blocks exit of the E-site tRNA. This is Small ribosomal subunit protein uS7 from Actinobacillus succinogenes (strain ATCC 55618 / DSM 22257 / CCUG 43843 / 130Z).